A 269-amino-acid chain; its full sequence is Homocitrate synthase subunit alpha (269 aa).

Residues 3–255 (INIVDTTLRD…IYTGDFEDII (253 aa)) form the Pyruvate carboxyltransferase domain.

The protein belongs to the alpha-IPM synthase/homocitrate synthase family. Heterodimer of an alpha and an omega chain.

It catalyses the reaction acetyl-CoA + 2-oxoglutarate + H2O = (2R)-homocitrate + CoA + H(+). Functionally, this protein is a Fe-Mo-cofactor biosynthetic component. The polypeptide is Homocitrate synthase subunit alpha (nifV-ALPHA) (Clostridium pasteurianum).